The following is a 199-amino-acid chain: Probable GTP-binding protein EngB (199 aa).

The EngB-type G domain occupies 28-199 (DLPEVALAGR…EAWDTILAEL (172 aa)). GTP is bound by residues 36 to 43 (GRSNVGKS), 63 to 67 (GKTQL), 81 to 84 (DVPG), 148 to 151 (TKAD), and 180 to 182 (FSS). Mg(2+) is bound by residues Ser-43 and Thr-65.

It belongs to the TRAFAC class TrmE-Era-EngA-EngB-Septin-like GTPase superfamily. EngB GTPase family. It depends on Mg(2+) as a cofactor.

Functionally, necessary for normal cell division and for the maintenance of normal septation. This Streptococcus thermophilus (strain CNRZ 1066) protein is Probable GTP-binding protein EngB.